The primary structure comprises 65 residues: SCOCO-like protein 1 (65 aa).

The stretch at R8–E44 forms a coiled coil.

It belongs to the SLO1 family.

The polypeptide is SCOCO-like protein 1 (Schizosaccharomyces pombe (strain 972 / ATCC 24843) (Fission yeast)).